Reading from the N-terminus, the 206-residue chain is Casparian strip membrane protein 1 (206 aa).

An N-acetylalanine modification is found at Ala-2. The Cytoplasmic segment spans residues 2–43; it reads AKESTTIDVGEPSTVTKSSSHVVKDAKKKGFVAVASRGGAKR. Residues 44–64 traverse the membrane as a helical segment; it reads GLAIFDFLLRLAAIAVTIGAA. Over 65-95 the chain is Extracellular; the sequence is SVMYTAEETLPFFTQFLQFQAGYDDLPAFQY. A helical membrane pass occupies residues 96–116; sequence FVIAVAVVASYLVLSLPFSIV. Residues 117 to 127 lie on the Cytoplasmic side of the membrane; the sequence is SIVRPHAVAPR. A helical transmembrane segment spans residues 128 to 148; that stretch reads LILLICDTLVVTLNTSAAAAA. The Extracellular portion of the chain corresponds to 149–180; sequence ASITYLAHNGNQSTNWLPICQQFGDFCQNVST. N-linked (GlcNAc...) asparagine glycans are attached at residues Asn-159 and Asn-177. The helical transmembrane segment at 181–201 threads the bilayer; the sequence is AVVADSIAILFFIVLIIISAI. Over 202–206 the chain is Cytoplasmic; it reads ALKRH.

Belongs to the Casparian strip membrane proteins (CASP) family. Homodimer and heterodimers with other CASP proteins. Interacts with CASP2, CASP3, CASP4 and CASP5.

Its subcellular location is the cell membrane. Its function is as follows. Regulates membrane-cell wall junctions and localized cell wall deposition. Required for establishment of the Casparian strip membrane domain (CSD) and the subsequent formation of Casparian strips, a cell wall modification of the root endodermis that determines an apoplastic barrier between the intraorganismal apoplasm and the extraorganismal apoplasm and prevents lateral diffusion. This Arabidopsis thaliana (Mouse-ear cress) protein is Casparian strip membrane protein 1 (CASP1).